A 198-amino-acid polypeptide reads, in one-letter code: Probable minor pilin MMP0709 (198 aa).

The propeptide occupies 1 to 5 (MSNRG). A QXSXEXXXL motif is present at residues 6–14 (QLSIEMVIL).

In terms of processing, the N-terminus is probably cleaved by the prepilin peptidase EppA, which recognizes the class III signal sequence.

The protein localises to the secreted. It localises to the cell surface. It is found in the fimbrium. This is Probable minor pilin MMP0709 from Methanococcus maripaludis (strain DSM 14266 / JCM 13030 / NBRC 101832 / S2 / LL).